Reading from the N-terminus, the 257-residue chain is Type III pantothenate kinase (257 aa).

6–13 (DSGNTNTV) is a binding site for ATP. Substrate is bound at residue 108 to 111 (GADR). The active-site Proton acceptor is the Asp-110. Residue Asp-130 participates in K(+) binding. ATP is bound at residue Thr-133. Thr-185 serves as a coordination point for substrate.

Belongs to the type III pantothenate kinase family. In terms of assembly, homodimer. NH4(+) is required as a cofactor. Requires K(+) as cofactor.

The protein localises to the cytoplasm. It catalyses the reaction (R)-pantothenate + ATP = (R)-4'-phosphopantothenate + ADP + H(+). It functions in the pathway cofactor biosynthesis; coenzyme A biosynthesis; CoA from (R)-pantothenate: step 1/5. In terms of biological role, catalyzes the phosphorylation of pantothenate (Pan), the first step in CoA biosynthesis. This chain is Type III pantothenate kinase, found in Rhodospirillum rubrum (strain ATCC 11170 / ATH 1.1.1 / DSM 467 / LMG 4362 / NCIMB 8255 / S1).